Reading from the N-terminus, the 220-residue chain is Deoxyribose-phosphate aldolase (220 aa).

The active-site Proton donor/acceptor is Asp-89. The Schiff-base intermediate with acetaldehyde role is filled by Lys-151. The Proton donor/acceptor role is filled by Lys-180.

The protein belongs to the DeoC/FbaB aldolase family. DeoC type 1 subfamily.

It is found in the cytoplasm. It carries out the reaction 2-deoxy-D-ribose 5-phosphate = D-glyceraldehyde 3-phosphate + acetaldehyde. Its pathway is carbohydrate degradation; 2-deoxy-D-ribose 1-phosphate degradation; D-glyceraldehyde 3-phosphate and acetaldehyde from 2-deoxy-alpha-D-ribose 1-phosphate: step 2/2. In terms of biological role, catalyzes a reversible aldol reaction between acetaldehyde and D-glyceraldehyde 3-phosphate to generate 2-deoxy-D-ribose 5-phosphate. The chain is Deoxyribose-phosphate aldolase from Staphylococcus epidermidis (strain ATCC 35984 / DSM 28319 / BCRC 17069 / CCUG 31568 / BM 3577 / RP62A).